A 118-amino-acid polypeptide reads, in one-letter code: V-type proton ATPase subunit G 2 (118 aa).

Residues 25–90 (ARKRKARRLK…VQGMQSSQQR (66 aa)) are disordered. A compositionally biased stretch (basic and acidic residues) spans 35-56 (QAKEEAQMEVEQYRREREHEFQ). Composition is skewed to polar residues over residues 57 to 69 (SKQQ…QGNL) and 78 to 89 (RRQVQGMQSSQQ).

Belongs to the V-ATPase G subunit family. In terms of assembly, V-ATPase is a heteromultimeric enzyme made up of two complexes: the ATP-hydrolytic V1 complex and the proton translocation V0 complex. The V1 complex consists of three catalytic AB heterodimers that form a heterohexamer, three peripheral stalks each consisting of EG heterodimers, one central rotor including subunits D and F, and the regulatory subunits C and H. The proton translocation complex V0 consists of the proton transport subunit a, a ring of proteolipid subunits c9c'', rotary subunit d, subunits e and f, and the accessory subunits ATP6AP1/Ac45 and ATP6AP2/PRR. In terms of tissue distribution, brain.

The protein resides in the melanosome. It localises to the cytoplasmic vesicle. The protein localises to the clathrin-coated vesicle membrane. Its function is as follows. Subunit of the V1 complex of vacuolar(H+)-ATPase (V-ATPase), a multisubunit enzyme composed of a peripheral complex (V1) that hydrolyzes ATP and a membrane integral complex (V0) that translocates protons. V-ATPase is responsible for acidifying and maintaining the pH of intracellular compartments and in some cell types, is targeted to the plasma membrane, where it is responsible for acidifying the extracellular environment. This is V-type proton ATPase subunit G 2 (ATP6V1G2) from Homo sapiens (Human).